A 452-amino-acid polypeptide reads, in one-letter code: Probable pectate lyase 9 (452 aa).

The signal sequence occupies residues 1-25; the sequence is MATSSLKLTSACFVLLFIFVGCVLT. Residues asparagine 88, asparagine 139, asparagine 214, and asparagine 233 are each glycosylated (N-linked (GlcNAc...) asparagine). Aspartate 250 is a binding site for Ca(2+). Asparagine 271 carries an N-linked (GlcNAc...) asparagine glycan. Ca(2+) is bound by residues aspartate 274 and aspartate 278. N-linked (GlcNAc...) asparagine glycosylation is found at asparagine 281 and asparagine 305. The active site involves arginine 330. Asparagine 374 is a glycosylation site (N-linked (GlcNAc...) asparagine).

It belongs to the polysaccharide lyase 1 family. Requires Ca(2+) as cofactor.

It catalyses the reaction Eliminative cleavage of (1-&gt;4)-alpha-D-galacturonan to give oligosaccharides with 4-deoxy-alpha-D-galact-4-enuronosyl groups at their non-reducing ends.. It participates in glycan metabolism; pectin degradation; 2-dehydro-3-deoxy-D-gluconate from pectin: step 2/5. The chain is Probable pectate lyase 9 from Arabidopsis thaliana (Mouse-ear cress).